A 208-amino-acid chain; its full sequence is Protein Nef (208 aa).

Positions 1–33 (MGGKWSKRMSGWSAVRERMKRAEPAEPAADGVG) are disordered. Glycine 2 is lipidated: N-myristoyl glycine; by host. Serine 6 bears the Phosphoserine; by host mark. Basic and acidic residues predominate over residues 15–24 (VRERMKRAEP). Residues 64-67 (EDED) form an acidic; interacts with host PACS1 and PACS2; stabilizes the interaction of NEF/MHC-I with host AP1M1; necessary for MHC-I internalization region. Residues 71–80 (PVRPQVPLRP) are SH3-binding; interaction with Src family tyrosine kinases. The PxxP; stabilizes the interaction of NEF/MHC-I with host AP1M1; necessary for MHC-I internalization signature appears at 74–77 (PQVP). A mediates dimerization, Nef-PTE1 interaction region spans residues 110 to 126 (DILDLWIHHTQGYFPDW). The tract at residues 150-182 (VDPDYVEEANAGENNSLLHPMSQHGMDDPEKEV) is binding to ATP6V1H. The short motif at 166-167 (LL) is the Dileucine internalization motif; necessary for CD4 internalization element. A Diacidic; necessary for CD4 internalization motif is present at residues 176-177 (DD).

Belongs to the lentivirus primate group Nef protein family. Monomer; cytosolic form. Homodimer; membrane bound form. Interacts with Nef associated p21-activated kinase (PAK2); this interaction activates PAK2. Associates with the Nef-MHC-I-AP1 complex; this complex is required for MHC-I internalization. Interacts (via C-terminus) with host PI3-kinase. Interacts with host PACS1; this interaction seems to be weak. Interacts with host PACS2. Interacts with host LCK and MAPK3; these interactions inhibit the kinase activity of the latter. Interacts with host ATP6V1H; this interaction may play a role in CD4 endocytosis. Associates with the CD4-Nef-AP2 complex; this complex is required for CD4 internalization. Interacts with host AP2 subunit alpha and AP2 subunit sigma2. Interacts with TCR-zeta chain; this interaction up-regulates the Fas ligand (FasL) surface expression. Interacts with host HCK, LYN, and SRC; these interactions activate the Src family kinases. Interacts with MAP3K5; this interaction inhibits the Fas and TNFR-mediated death signals. Interacts with beta-COP and PTE1. Interacts with human RACK1; this increases Nef phosphorylation by PKC. Interacts with TP53; this interaction decreases the half-life of TP53, protecting the infected cell against p53-mediated apoptosis. The virion-associated Nef proteins are cleaved by the viral protease to release the soluble C-terminal core protein. Nef is probably cleaved concomitantly with viral structural proteins on maturation of virus particles. Post-translationally, myristoylated. In terms of processing, phosphorylated on serine residues, probably by host PKCdelta and theta.

It is found in the host cell membrane. It localises to the virion. The protein localises to the secreted. The protein resides in the host Golgi apparatus membrane. Its function is as follows. Factor of infectivity and pathogenicity, required for optimal virus replication. Alters numerous pathways of T-lymphocyte function and down-regulates immunity surface molecules in order to evade host defense and increase viral infectivity. Alters the functionality of other immunity cells, like dendritic cells, monocytes/macrophages and NK cells. In infected CD4(+) T-lymphocytes, down-regulates the surface MHC-I, mature MHC-II, CD4, CD28, CCR5 and CXCR4 molecules. Mediates internalization and degradation of host CD4 through the interaction of with the cytoplasmic tail of CD4, the recruitment of AP-2 (clathrin adapter protein complex 2), internalization through clathrin coated pits, and subsequent transport to endosomes and lysosomes for degradation. Diverts host MHC-I molecules to the trans-Golgi network-associated endosomal compartments by an endocytic pathway to finally target them for degradation. MHC-I down-regulation may involve AP-1 (clathrin adapter protein complex 1) or possibly Src family kinase-ZAP70/Syk-PI3K cascade recruited by PACS2. In consequence infected cells are masked for immune recognition by cytotoxic T-lymphocytes. Decreasing the number of immune receptors also prevents reinfection by more HIV particles (superinfection). Down-regulates host SERINC3 and SERINC5 thereby excluding these proteins from the viral particles. Virion infectivity is drastically higher when SERINC3 or SERINC5 are excluded from the viral envelope, because these host antiviral proteins impair the membrane fusion event necessary for subsequent virion penetration. In terms of biological role, bypasses host T-cell signaling by inducing a transcriptional program nearly identical to that of anti-CD3 cell activation. Interaction with TCR-zeta chain up-regulates the Fas ligand (FasL). Increasing surface FasL molecules and decreasing surface MHC-I molecules on infected CD4(+) cells send attacking cytotoxic CD8+ T-lymphocytes into apoptosis. Functionally, plays a role in optimizing the host cell environment for viral replication without causing cell death by apoptosis. Protects the infected cells from apoptosis in order to keep them alive until the next virus generation is ready to strike. Inhibits the Fas and TNFR-mediated death signals by blocking MAP3K5/ASK1. Decreases the half-life of TP53, protecting the infected cell against p53-mediated apoptosis. Inhibits the apoptotic signals regulated by the Bcl-2 family proteins through the formation of a Nef/PI3-kinase/PAK2 complex that leads to activation of PAK2 and induces phosphorylation of host BAD. Its function is as follows. Extracellular Nef protein targets CD4(+) T-lymphocytes for apoptosis by interacting with CXCR4 surface receptors. This chain is Protein Nef, found in Human immunodeficiency virus type 1 group M subtype B (isolate SF162) (HIV-1).